Here is a 728-residue protein sequence, read N- to C-terminus: MFKITREEIEWGGRTLVLETGKIARQADGAVLATYGDTTVLATVVGERKPKPGLDFFPLTVNYQEKTYAAGKIPGGFFKREGRPSEKETLVSRLIDRPIRPLFIKGFKNETQVIATVVSHDMENDPDIVAMIAVSAALTISGLPFLGPIGAARVGYIGGEYKLNPMIDEMPESALDLVVAGTADAVMMVESEAKELSEDIMLGAVMFGHKEFQPVIDMIIRMAEKCAKEPRAIDVKDNSELVAKVRELAESDVRAAYGLKDKGQRHEALAAAKDKVKSALCNPEDPNAVSETDVGGVFKSIESDVVRNSILDTKSRIDGRDLETVRPIVSEVGVLPRTHGSALFTRGETQALVVATLGTGDDEQFIDALEGTYKENFLLHYNFPPFSVGETGRVGFTGRREVGHGKLAWRALRAVLPPKTEFPYTLRLVSEITESNGSSSMATVCGSSLAMMDAGVPLKRAVAGIAMGLILEGERFAVLSDILGDEDHLGDMDFKVAGTQEGVTSLQMDIKITGINERIMKQALAQAKGGRLHILGEMAKALDTARPEMGEYAPRIEVITVPTDKIREVIGTGGKVIREIVEKTGAKVDISDDGTIKVASSDGESIRKAIAWIQGIVAEPEVGKIYEGTVVKAVDFGAFVNFFGPRDGLVHISQMAPTRVEQVSDVVKEGDKVKVKLLGFDDRGKVRLSMKHVNQETGEEIVYENEPAEQPREKREGGGGRGRRRERD.

The Mg(2+) site is built by Asp487 and Asp493. The KH domain maps to 554–613; it reads PRIEVITVPTDKIREVIGTGGKVIREIVEKTGAKVDISDDGTIKVASSDGESIRKAIAWI. Residues 623–691 form the S1 motif domain; it reads GKIYEGTVVK…DRGKVRLSMK (69 aa). The segment covering 697 to 707 has biased composition (acidic residues); sequence TGEEIVYENEP. The tract at residues 697–728 is disordered; it reads TGEEIVYENEPAEQPREKREGGGGRGRRRERD. Residues 709–718 show a composition bias toward basic and acidic residues; it reads EQPREKREGG.

This sequence belongs to the polyribonucleotide nucleotidyltransferase family. Mg(2+) is required as a cofactor.

The protein localises to the cytoplasm. The catalysed reaction is RNA(n+1) + phosphate = RNA(n) + a ribonucleoside 5'-diphosphate. In terms of biological role, involved in mRNA degradation. Catalyzes the phosphorolysis of single-stranded polyribonucleotides processively in the 3'- to 5'-direction. This is Polyribonucleotide nucleotidyltransferase from Parvibaculum lavamentivorans (strain DS-1 / DSM 13023 / NCIMB 13966).